The chain runs to 234 residues: Lipoprotein-releasing system ATP-binding protein LolD 1 (234 aa).

An ABC transporter domain is found at isoleucine 5–glycine 231. ATP is bound at residue glycine 41–serine 48.

Belongs to the ABC transporter superfamily. Lipoprotein translocase (TC 3.A.1.125) family. The complex is composed of two ATP-binding proteins (LolD) and two transmembrane proteins (LolC and LolE).

It localises to the cell inner membrane. Part of the ABC transporter complex LolCDE involved in the translocation of mature outer membrane-directed lipoproteins, from the inner membrane to the periplasmic chaperone, LolA. Responsible for the formation of the LolA-lipoprotein complex in an ATP-dependent manner. This is Lipoprotein-releasing system ATP-binding protein LolD 1 from Caulobacter vibrioides (strain ATCC 19089 / CIP 103742 / CB 15) (Caulobacter crescentus).